Consider the following 201-residue polypeptide: Cytochrome c oxidase subunit 3 (201 aa).

The next 4 helical transmembrane spans lie at 25 to 45 (VLGL…LFAA), 65 to 85 (LFVP…IHYG), 100 to 120 (WYWI…YEYL), and 137 to 157 (VMTG…LGVI).

It belongs to the cytochrome c oxidase subunit 3 family.

It is found in the cell membrane. It catalyses the reaction 4 Fe(II)-[cytochrome c] + O2 + 8 H(+)(in) = 4 Fe(III)-[cytochrome c] + 2 H2O + 4 H(+)(out). In Thermostichus vulcanus (Synechococcus vulcanus), this protein is Cytochrome c oxidase subunit 3 (ctaE).